Here is a 67-residue protein sequence, read N- to C-terminus: MMFRLTSVSCFLLVIACLNLFQVVLTSRCFPPGIYCTPYLPCCWGICCDTCRNVCHLRFGKRATFQE.

The N-terminal stretch at 1–26 (MMFRLTSVSCFLLVIACLNLFQVVLT) is a signal peptide. 4 disulfide bridges follow: Cys-29–Cys-43, Cys-36–Cys-48, Cys-42–Cys-51, and Cys-47–Cys-55. At Phe-59 the chain carries Phenylalanine amide. Residues 63–67 (ATFQE) constitute a propeptide that is removed on maturation.

Belongs to the conotoxin I2 superfamily. In terms of tissue distribution, expressed by the venom duct.

It localises to the secreted. Its function is as follows. Inhibits the vertebrate voltage-gated potassium channels Kv1.1/KCNA1 and Kv1.3/KCNA3. The sequence is that of Kappa-conotoxin-like 2 from Conus vexillum (Flag cone).